The following is a 1097-amino-acid chain: Transmembrane protein 132D (1097 aa).

A signal peptide spans 1 to 30 (MCPSEMGTLWYLWSPVLISLAALFSKVTEG). Over 31-913 (RGILESIQRF…LDQAAKGLSD (883 aa)) the chain is Extracellular. Residues 233-245 (DERGDCAKEDSRK) show a composition bias toward basic and acidic residues. The disordered stretch occupies residues 233–263 (DERGDCAKEDSRKSGGTPAGHNDVDESSPPL). Residues 914 to 934 (LEIGMYALLGVFCLAILVFLI) traverse the membrane as a helical segment. The Cytoplasmic segment spans residues 935–1097 (NCVTFALKYR…SCMERLHEHV (163 aa)). A disordered region spans residues 1021–1042 (MLTDDQEQKSEPPTSPTSKRKR).

It belongs to the TMEM132 family. As to expression, expressed in mature oligodendrocytes in the white and gray matter of the brain.

It localises to the membrane. In terms of biological role, regulates neuronal morphology via inhibition of the WAVE regulatory complex (WCR), a complex that controls F-actin cytoskeletal dynamics. The protein is Transmembrane protein 132D (Tmem132d) of Mus musculus (Mouse).